A 29-amino-acid polypeptide reads, in one-letter code: Photosystem I reaction center subunit XII (29 aa).

The helical transmembrane segment at I7 to T26 threads the bilayer.

The protein belongs to the PsaM family.

Its subcellular location is the plastid. The protein localises to the chloroplast thylakoid membrane. The chain is Photosystem I reaction center subunit XII from Guillardia theta (Cryptophyte).